Reading from the N-terminus, the 229-residue chain is Cytochrome c oxidase subunit 2 (229 aa).

Over 1–26 the chain is Mitochondrial intermembrane; sequence MANWTQLGLQDASSPLMEELIYFHDY. Residues 27–48 traverse the membrane as a helical segment; it reads TLIILTLITILVFYGLASLIVS. The Mitochondrial matrix portion of the chain corresponds to 49-62; it reads SNTNRFFLEGQSLE. Residues 63–82 form a helical membrane-spanning segment; that stretch reads TIWTVIPAVILIFIALPSLQ. Topologically, residues 83 to 229 are mitochondrial intermembrane; it reads LLYLIDEVNN…ENWVSNFLNE (147 aa). Cu cation is bound by residues His161, Cys196, Glu198, Cys200, His204, and Met207. Glu198 contacts Mg(2+).

The protein belongs to the cytochrome c oxidase subunit 2 family. In terms of assembly, component of the cytochrome c oxidase (complex IV, CIV), a multisubunit enzyme composed of a catalytic core of 3 subunits and several supernumerary subunits. The complex exists as a monomer or a dimer and forms supercomplexes (SCs) in the inner mitochondrial membrane with ubiquinol-cytochrome c oxidoreductase (cytochrome b-c1 complex, complex III, CIII). Requires Cu cation as cofactor.

It localises to the mitochondrion inner membrane. It catalyses the reaction 4 Fe(II)-[cytochrome c] + O2 + 8 H(+)(in) = 4 Fe(III)-[cytochrome c] + 2 H2O + 4 H(+)(out). Component of the cytochrome c oxidase, the last enzyme in the mitochondrial electron transport chain which drives oxidative phosphorylation. The respiratory chain contains 3 multisubunit complexes succinate dehydrogenase (complex II, CII), ubiquinol-cytochrome c oxidoreductase (cytochrome b-c1 complex, complex III, CIII) and cytochrome c oxidase (complex IV, CIV), that cooperate to transfer electrons derived from NADH and succinate to molecular oxygen, creating an electrochemical gradient over the inner membrane that drives transmembrane transport and the ATP synthase. Cytochrome c oxidase is the component of the respiratory chain that catalyzes the reduction of oxygen to water. Electrons originating from reduced cytochrome c in the intermembrane space (IMS) are transferred via the dinuclear copper A center (CU(A)) of subunit 2 and heme A of subunit 1 to the active site in subunit 1, a binuclear center (BNC) formed by heme A3 and copper B (CU(B)). The BNC reduces molecular oxygen to 2 water molecules using 4 electrons from cytochrome c in the IMS and 4 protons from the mitochondrial matrix. This Pisaster ochraceus (Ochre sea star) protein is Cytochrome c oxidase subunit 2 (COII).